A 386-amino-acid polypeptide reads, in one-letter code: S-adenosylmethionine synthase (386 aa).

Position 17 (H17) interacts with ATP. D19 is a binding site for Mg(2+). E45 is a K(+) binding site. L-methionine contacts are provided by E58 and Q101. Positions 101 to 111 (QSPDISQGVTE) are flexible loop. ATP-binding positions include 168–170 (DAK), D242, 248–249 (RK), A265, and K269. L-methionine is bound at residue D242. Residue K273 participates in L-methionine binding.

Belongs to the AdoMet synthase family. As to quaternary structure, homotetramer; dimer of dimers. The cofactor is Mg(2+). Requires K(+) as cofactor.

The protein localises to the cytoplasm. It catalyses the reaction L-methionine + ATP + H2O = S-adenosyl-L-methionine + phosphate + diphosphate. Its pathway is amino-acid biosynthesis; S-adenosyl-L-methionine biosynthesis; S-adenosyl-L-methionine from L-methionine: step 1/1. Catalyzes the formation of S-adenosylmethionine (AdoMet) from methionine and ATP. The overall synthetic reaction is composed of two sequential steps, AdoMet formation and the subsequent tripolyphosphate hydrolysis which occurs prior to release of AdoMet from the enzyme. This Leptospira interrogans serogroup Icterohaemorrhagiae serovar copenhageni (strain Fiocruz L1-130) protein is S-adenosylmethionine synthase.